The sequence spans 239 residues: tRNA (guanine-N(7)-)-methyltransferase (239 aa).

Glu69, Glu94, Asp121, and Asp144 together coordinate S-adenosyl-L-methionine. Asp144 is an active-site residue. Residue Lys148 participates in substrate binding. The segment at 150–155 (RHNKRR) is interaction with RNA. Substrate contacts are provided by residues Asp180 and 217-220 (TKFE).

This sequence belongs to the class I-like SAM-binding methyltransferase superfamily. TrmB family. As to quaternary structure, monomer.

The enzyme catalyses guanosine(46) in tRNA + S-adenosyl-L-methionine = N(7)-methylguanosine(46) in tRNA + S-adenosyl-L-homocysteine. It participates in tRNA modification; N(7)-methylguanine-tRNA biosynthesis. Functionally, catalyzes the formation of N(7)-methylguanine at position 46 (m7G46) in tRNA. This chain is tRNA (guanine-N(7)-)-methyltransferase, found in Salmonella choleraesuis (strain SC-B67).